A 154-amino-acid chain; its full sequence is RING finger protein 11 (154 aa).

Over residues 1 to 12 (MGNCLKSPTSDD) the composition is skewed to polar residues. The disordered stretch occupies residues 1–53 (MGNCLKSPTSDDISLLHESQSDRASFGEGTEPDQEPPPPYQEQVPVPVYHPTP). The N-myristoyl glycine moiety is linked to residue G2. Residue C4 is the site of S-palmitoyl cysteine attachment. Phosphoserine is present on residues S14 and S25. Positions 37-40 (PPPY) match the PPxY motif motif. A compositionally biased stretch (low complexity) spans 41-51 (QEQVPVPVYHP). The RING-type zinc finger occupies 99-140 (CVICMMDFVYGDPIRFLPCMHIYHLDCIDDWLMRSFTCPSCM). T135 carries the post-translational modification Phosphothreonine; by PKB/AKT1.

Interacts (when phosphorylated) with 14-3-3. Interacts with the E3 ubiquitin-ligases NEDD4, ITCH, SMURF2 and WWP1. Also interacts with the E2 ubiquitin-conjugating enzymes UBE2D1 and UBE2N, but neither with CDC34, nor with UBE2L3. Interacts with ZNF350, EPS15 and STAMBP. After TNF stimulation, interacts with TAX1BP1, TNFAIP3 and RIPK1; these interactions are transient and they are lost after 1 hour of stimulation with TNF. Interacts with GGA1. In terms of processing, ubiquitinated in the presence of ITCH, SMURF2 and UBE2D1, as well as WWP1. Phosphorylation by PKB/AKT1 may accelerate degradation by the proteasome. Post-translationally, acylation at both Gly-2 and Cys-4 is required for proper localization to the endosomes.

It is found in the early endosome. The protein resides in the recycling endosome. The protein localises to the cytoplasm. It localises to the nucleus. Essential component of a ubiquitin-editing protein complex, comprising also TNFAIP3, ITCH and TAX1BP1, that ensures the transient nature of inflammatory signaling pathways. Promotes the association of TNFAIP3 to RIPK1 after TNF stimulation. TNFAIP3 deubiquitinates 'Lys-63' polyubiquitin chains on RIPK1 and catalyzes the formation of 'Lys-48'-polyubiquitin chains. This leads to RIPK1 proteasomal degradation and consequently termination of the TNF- or LPS-mediated activation of NF-kappa-B. Recruits STAMBP to the E3 ubiquitin-ligase SMURF2 for ubiquitination, leading to its degradation by the 26S proteasome. In Bos taurus (Bovine), this protein is RING finger protein 11 (RNF11).